The following is a 283-amino-acid chain: ATP phosphoribosyltransferase (283 aa).

This sequence belongs to the ATP phosphoribosyltransferase family. Long subfamily. In terms of assembly, equilibrium between an active dimeric form, an inactive hexameric form and higher aggregates. Interconversion between the various forms is largely reversible and is influenced by the natural substrates and inhibitors of the enzyme. Requires Mg(2+) as cofactor.

The protein localises to the cytoplasm. The catalysed reaction is 1-(5-phospho-beta-D-ribosyl)-ATP + diphosphate = 5-phospho-alpha-D-ribose 1-diphosphate + ATP. It participates in amino-acid biosynthesis; L-histidine biosynthesis; L-histidine from 5-phospho-alpha-D-ribose 1-diphosphate: step 1/9. Its activity is regulated as follows. Feedback inhibited by histidine. Catalyzes the condensation of ATP and 5-phosphoribose 1-diphosphate to form N'-(5'-phosphoribosyl)-ATP (PR-ATP). Has a crucial role in the pathway because the rate of histidine biosynthesis seems to be controlled primarily by regulation of HisG enzymatic activity. The chain is ATP phosphoribosyltransferase from Mycobacterium sp. (strain KMS).